The primary structure comprises 259 residues: UPF0739 protein C1orf74 homolog (259 aa).

It belongs to the UPF0739 family.

This is UPF0739 protein C1orf74 homolog from Danio rerio (Zebrafish).